Here is a 353-residue protein sequence, read N- to C-terminus: Delta-aminolevulinic acid dehydratase (353 aa).

The Schiff-base intermediate with substrate role is filled by K221. Residues R231 and K244 each contribute to the 5-aminolevulinate site. Mg(2+) is bound at residue E260. K275 (schiff-base intermediate with substrate) is an active-site residue. S301 and Y340 together coordinate 5-aminolevulinate.

Belongs to the ALAD family. As to quaternary structure, homooctamer. Mg(2+) serves as cofactor.

It catalyses the reaction 2 5-aminolevulinate = porphobilinogen + 2 H2O + H(+). It functions in the pathway porphyrin-containing compound metabolism; protoporphyrin-IX biosynthesis; coproporphyrinogen-III from 5-aminolevulinate: step 1/4. Functionally, catalyzes an early step in the biosynthesis of tetrapyrroles. Binds two molecules of 5-aminolevulinate per subunit, each at a distinct site, and catalyzes their condensation to form porphobilinogen. Required for nodule development. This chain is Delta-aminolevulinic acid dehydratase (hemB), found in Bradyrhizobium diazoefficiens (strain JCM 10833 / BCRC 13528 / IAM 13628 / NBRC 14792 / USDA 110).